We begin with the raw amino-acid sequence, 194 residues long: Peptidyl-tRNA hydrolase (194 aa).

Y17 is a tRNA binding site. H22 serves as the catalytic Proton acceptor. F68, N70, and N116 together coordinate tRNA.

It belongs to the PTH family. As to quaternary structure, monomer.

Its subcellular location is the cytoplasm. It carries out the reaction an N-acyl-L-alpha-aminoacyl-tRNA + H2O = an N-acyl-L-amino acid + a tRNA + H(+). Functionally, hydrolyzes ribosome-free peptidyl-tRNAs (with 1 or more amino acids incorporated), which drop off the ribosome during protein synthesis, or as a result of ribosome stalling. Its function is as follows. Catalyzes the release of premature peptidyl moieties from peptidyl-tRNA molecules trapped in stalled 50S ribosomal subunits, and thus maintains levels of free tRNAs and 50S ribosomes. The protein is Peptidyl-tRNA hydrolase of Shewanella woodyi (strain ATCC 51908 / MS32).